Consider the following 208-residue polypeptide: Ribosomal RNA large subunit methyltransferase E (208 aa).

The S-adenosyl-L-methionine site is built by Gly-63, Trp-65, Asp-83, Asp-99, and Asp-124. Lys-164 functions as the Proton acceptor in the catalytic mechanism.

This sequence belongs to the class I-like SAM-binding methyltransferase superfamily. RNA methyltransferase RlmE family.

It localises to the cytoplasm. The catalysed reaction is uridine(2552) in 23S rRNA + S-adenosyl-L-methionine = 2'-O-methyluridine(2552) in 23S rRNA + S-adenosyl-L-homocysteine + H(+). Its function is as follows. Specifically methylates the uridine in position 2552 of 23S rRNA at the 2'-O position of the ribose in the fully assembled 50S ribosomal subunit. The sequence is that of Ribosomal RNA large subunit methyltransferase E from Alcanivorax borkumensis (strain ATCC 700651 / DSM 11573 / NCIMB 13689 / SK2).